The chain runs to 139 residues: Plastocyanin (139 aa).

The N-terminal stretch at 1 to 34 (MKLIAASLRRLSLAVLTVLLVVSSFAVFTPSASA) is a signal peptide. The Plastocyanin-like domain maps to 35-139 (ETYTVKLGSD…GMVGKITVAG (105 aa)). Residues histidine 73, cysteine 123, histidine 126, and methionine 131 each coordinate Cu cation.

This sequence belongs to the plastocyanin family. It depends on Cu(2+) as a cofactor.

It is found in the cellular thylakoid membrane. Functionally, participates in electron transfer between P700 and the cytochrome b6-f complex in photosystem I. The protein is Plastocyanin (petE) of Nostoc sp. (strain PCC 7120 / SAG 25.82 / UTEX 2576).